The primary structure comprises 651 residues: Probable potassium transport system protein Kup (651 aa).

12 consecutive transmembrane segments (helical) span residues 41 to 61 (LVLG…IYAF), 82 to 102 (VVSL…VLFV), 130 to 150 (LILG…VITP), 163 to 183 (IVAP…LVTL), 194 to 214 (VAIV…ASGL), 235 to 255 (FLTV…LAMT), 276 to 296 (WLWI…AFIL), 309 to 329 (MIPS…TVIA), 366 to 386 (IYIP…VLGF), 395 to 415 (AYGI…YIVM), 426 to 446 (ALPI…ANII), and 450 to 470 (EGGW…WTWV).

The protein belongs to the HAK/KUP transporter (TC 2.A.72) family.

It is found in the cell inner membrane. The catalysed reaction is K(+)(in) + H(+)(in) = K(+)(out) + H(+)(out). Its function is as follows. Transport of potassium into the cell. Likely operates as a K(+):H(+) symporter. The chain is Probable potassium transport system protein Kup from Brucella suis (strain ATCC 23445 / NCTC 10510).